Reading from the N-terminus, the 798-residue chain is Putative antiporter subunit mnhA2 (798 aa).

The next 21 membrane-spanning stretches (helical) occupy residues 1 to 21, 33 to 53, 78 to 98, 109 to 129, 133 to 153, 167 to 187, 209 to 229, 241 to 261, 272 to 292, 300 to 320, 337 to 357, 381 to 401, 431 to 451, 472 to 492, 526 to 546, 593 to 613, 625 to 645, 649 to 669, 674 to 694, 710 to 730, and 766 to 786; these read MSLV…LFTL, IALL…PSVM, GLSL…VYYA, LPRF…IVTA, ILMY…IVYW, FMIT…IYIV, FIPI…QFPF, TPVS…FLLF, FYIY…AVNA, AILA…VGLG, MILF…GALF, VFPI…GIPF, IITV…VYMI, PFLF…IFFI, GFNL…IMAL, ITIT…QAGF, GPIE…LTFI, LTMV…FILM, LALT…VSFS, AVKI…VFIA, and IDTL…YTLL.

The protein belongs to the CPA3 antiporters (TC 2.A.63) subunit A family. As to quaternary structure, may form a heterooligomeric complex that consists of seven subunits: mnhA2, mnhB2, mnhC2, mnhD2, mnhE2, mnhF2 and mnhG2.

The protein resides in the cell membrane. The protein is Putative antiporter subunit mnhA2 (mnhA2) of Staphylococcus saprophyticus subsp. saprophyticus (strain ATCC 15305 / DSM 20229 / NCIMB 8711 / NCTC 7292 / S-41).